Here is a 358-residue protein sequence, read N- to C-terminus: Peptide chain release factor 1 (358 aa).

Gln-233 is subject to N5-methylglutamine.

Belongs to the prokaryotic/mitochondrial release factor family. Post-translationally, methylated by PrmC. Methylation increases the termination efficiency of RF1.

It is found in the cytoplasm. Peptide chain release factor 1 directs the termination of translation in response to the peptide chain termination codons UAG and UAA. This is Peptide chain release factor 1 from Flavobacterium johnsoniae (strain ATCC 17061 / DSM 2064 / JCM 8514 / BCRC 14874 / CCUG 350202 / NBRC 14942 / NCIMB 11054 / UW101) (Cytophaga johnsonae).